A 63-amino-acid chain; its full sequence is Large ribosomal subunit protein bL32 (63 aa).

The segment at 1-27 (MANPKAKMSKSRRDKRRAQFNARTKPV) is disordered. A compositionally biased stretch (basic residues) spans 7 to 18 (KMSKSRRDKRRA).

The protein belongs to the bacterial ribosomal protein bL32 family.

This chain is Large ribosomal subunit protein bL32, found in Chlorobium phaeobacteroides (strain DSM 266 / SMG 266 / 2430).